We begin with the raw amino-acid sequence, 211 residues long: MRLTAKQVIWLKVCLHLAGLLPFLWLVWAINHGGLGADPVKDIQHFTGRTALKFLLAALLITPLARYAKQPLLIRTRRLLGLWCFAWATLHLTSYALLELGVNNLALLGKELITRPYLTLGIISWVILLALAFTSTQSMQRKLGKHWQQLHNFVYLVAILAPIHYLWSVKIISPQPLMYAGLAVLLLALRYKKLLSLFNRLRKQAHNKLSL.

The next 5 helical transmembrane spans lie at 8–28 (VIWL…WLVW), 54–74 (FLLA…PLLI), 82–102 (LWCF…ELGV), 116–136 (PYLT…FTST), and 153–173 (FVYL…KIIS).

The protein belongs to the MsrQ family. Heterodimer of a catalytic subunit (MsrP) and a heme-binding subunit (MsrQ). It depends on FMN as a cofactor. Heme b is required as a cofactor.

It is found in the cell inner membrane. Functionally, part of the MsrPQ system that repairs oxidized periplasmic proteins containing methionine sulfoxide residues (Met-O), using respiratory chain electrons. Thus protects these proteins from oxidative-stress damage caused by reactive species of oxygen and chlorine generated by the host defense mechanisms. MsrPQ is essential for the maintenance of envelope integrity under bleach stress, rescuing a wide series of structurally unrelated periplasmic proteins from methionine oxidation, including the primary periplasmic chaperone SurA and the lipoprotein Pal. MsrQ provides electrons for reduction to the reductase catalytic subunit MsrP, using the quinone pool of the respiratory chain. This Escherichia coli O6:K15:H31 (strain 536 / UPEC) protein is Protein-methionine-sulfoxide reductase heme-binding subunit MsrQ.